The primary structure comprises 1821 residues: Latent-transforming growth factor beta-binding protein 2 (1821 aa).

The signal sequence occupies residues 1–35 (MRPRTKARSPGRALRNPWRGFLPLTLALFVGAGHA). Disordered stretches follow at residues 38-58 (DPVG…RPGG) and 81-165 (GLQP…RLTG). Residues 94 to 115 (SPRRPTEAEARRPSRAQQSRRV) form a heparin-binding region. Low complexity-rich tracts occupy residues 108-120 (RAQQ…PPAQ) and 129-145 (QQQP…LPRL). A glycan (N-linked (GlcNAc...) asparagine) is linked at Asn181. Residues 187 to 219 (IKPVCEPPCQNRGSCSRPQLCVCRSGFRGARCE) form the EGF-like 1 domain. Cystine bridges form between Cys191–Cys201, Cys195–Cys207, and Cys209–Cys218. A disordered region spans residues 229-339 (PQNSRLAPRR…AVPLEHPSSP (111 aa)). Positions 232-249 (SRLAPRRWAERSPNLRRS) are heparin-binding. A compositionally biased stretch (pro residues) spans 262–274 (PPAPQSPPAPQSP). Composition is skewed to polar residues over residues 280–292 (SGLS…QQHV) and 304–314 (ATASSQLSSNA). Residue Asn343 is glycosylated (N-linked (GlcNAc...) asparagine). A heparin-binding site is contributed by 344-354 (LTEKIKKIKIV). Positions 375–377 (RGD) match the Cell attachment site motif. The EGF-like 2 domain maps to 396 to 428 (RIYFCQIPCLNGGRCIGRDECWCPANSTGKFCH). Cystine bridges form between Cys400–Cys410, Cys404–Cys416, and Cys418–Cys427. Asn421 is a glycosylation site (N-linked (GlcNAc...) asparagine). Ser506 is modified (phosphoserine). Residues 510–544 (RPPPWLPASPGHSLWDSNNIPARSGEPPRPLPPAA) form a disordered region. One can recognise a TB 1 domain in the interval 552-604 (GRCYLNTVNGQCANPLLELTTQEDCCGSVGAFWGVTLCAPCPPRPASPVIENG). 3 disulfide bridges follow: Cys554/Cys576, Cys563/Cys589, and Cys577/Cys592. Asn616 is a glycosylation site (N-linked (GlcNAc...) asparagine). An EGF-like 3; calcium-binding domain is found at 622–662 (DINECLTLGLCKDAECVNTRGSYLCTCRPGLMLDPSRSRCV). Intrachain disulfides connect Cys626/Cys637, Cys632/Cys646, Cys648/Cys661, Cys674/Cys696, Cys683/Cys709, Cys697/Cys712, and Cys698/Cys724. Positions 672–724 (GLCYRSLGPGTCTLPLAQRITKQICCCSRVGKAWGSECEKCPLPGTEAFREIC) constitute a TB 2 domain. Over residues 744-757 (AEEEELARPPREQG) the composition is skewed to basic and acidic residues. The interval 744 to 772 (AEEEELARPPREQGQRSSGALPGPAERQP) is disordered. Residue Asn811 is glycosylated (N-linked (GlcNAc...) asparagine). One can recognise an EGF-like 4 domain in the interval 844 to 886 (GIDRCAAGATNVCGPGTCVNLPDGYRCVCSPGYQLHPSQAYCT). Disulfide bonds link Cys848-Cys861, Cys856-Cys870, Cys872-Cys885, Cys891-Cys902, Cys896-Cys911, Cys913-Cys928, Cys934-Cys945, Cys940-Cys954, Cys956-Cys968, Cys974-Cys985, Cys980-Cys994, Cys997-Cys1008, Cys1014-Cys1025, Cys1020-Cys1034, Cys1036-Cys1049, Cys1055-Cys1066, Cys1061-Cys1075, Cys1078-Cys1091, Cys1097-Cys1108, Cys1103-Cys1117, Cys1120-Cys1133, Cys1139-Cys1151, Cys1146-Cys1160, Cys1162-Cys1174, Cys1180-Cys1192, Cys1186-Cys1201, Cys1203-Cys1216, Cys1222-Cys1233, Cys1228-Cys1242, Cys1244-Cys1257, Cys1263-Cys1276, Cys1271-Cys1285, Cys1289-Cys1301, Cys1307-Cys1319, Cys1313-Cys1328, Cys1330-Cys1343, Cys1349-Cys1361, Cys1356-Cys1370, Cys1372-Cys1386, Cys1413-Cys1436, Cys1423-Cys1448, Cys1437-Cys1451, Cys1438-Cys1463, Cys1489-Cys1502, Cys1497-Cys1511, Cys1513-Cys1526, Cys1532-Cys1542, Cys1537-Cys1551, and Cys1553-Cys1566. One can recognise an EGF-like 5; calcium-binding domain in the interval 887–929 (DDNECLRDPCKGKGRCINRVGSYSCFCYPGYTLATSGATQECQ). The EGF-like 6; calcium-binding domain maps to 930–969 (DINECEQPGVCSGGQCTNTEGSYHCECDQGYIMVRKGHCQ). Residues 970 to 1009 (DINECRHPGTCPDGRCVNSPGSYTCLACEEGYRGQSGSCV) enclose the EGF-like 7; calcium-binding domain. One can recognise an EGF-like 8; calcium-binding domain in the interval 1010 to 1050 (DVNECLTPGVCAHGKCTNLEGSFRCSCEQGYEVTSDEKGCQ). In terms of domain architecture, EGF-like 9; calcium-binding spans 1051–1092 (DVDECASRASCPTGLCLNTEGSFACSACENGYWVNEDGTACE). An EGF-like 10; calcium-binding domain is found at 1093 to 1134 (DLDECAFPGVCPSGVCTNTAGSFSCKDCDGGYRPSPLGDSCE). Residues 1135–1175 (DVDECEDPQSSCLGGECKNTVGSYQCLCPQGFQLANGTVCE) form the EGF-like 11; calcium-binding domain. A glycan (N-linked (GlcNAc...) asparagine) is linked at Asn1170. Residues 1176–1217 (DVNECMGEEHCAPHGECLNSHGSFFCLCAPGFVSAEGGTSCQ) form the EGF-like 12; calcium-binding domain. Residues 1218–1258 (DVDECATTDPCVGGHCVNTEGSFNCLCETGFQPSPESGECV) form the EGF-like 13; calcium-binding domain. One can recognise an EGF-like 14; calcium-binding domain in the interval 1259-1302 (DIDECEDYGDPVCGTWKCENSPGSYRCVLGCQPGFHMAPNGDCI). The EGF-like 15; calcium-binding domain occupies 1303 to 1344 (DIDECANDTMCGSHGFCDNTDGSFRCLCDQGFEISPSGWDCV). Asn1309 carries N-linked (GlcNAc...) asparagine glycosylation. Residues 1345-1387 (DVNECELMLAVCGAALCENVEGSFLCLCASDLEEYDAQEGHCR) form the EGF-like 16; calcium-binding domain. Positions 1411 to 1463 (MDCYSGQKGHAPCSSVLGRNTTQAECCCTQGASWGDACDLCPSEDSAEFSEIC) constitute a TB 3 domain. A glycan (N-linked (GlcNAc...) asparagine) is linked at Asn1430. Positions 1485-1527 (DADECVIFGPGLCPNGRCLNTVPGYVCLCNPGFHYDASHKKCE) constitute an EGF-like 17; calcium-binding domain. The EGF-like 18; calcium-binding domain maps to 1528 to 1567 (DHDECQDLACENGECVNTEGSFHCFCSPPLTLDLSQQRCM). Asn1568 is a glycosylation site (N-linked (GlcNAc...) asparagine). The TB 4 domain maps to 1584 to 1636 (DICWKKVTNDVCSEPLRGHRTTYTECCCQDGEAWSQQCALCPPRSSEVYAQLC). 10 cysteine pairs are disulfide-bonded: Cys1586-Cys1609, Cys1595-Cys1621, Cys1610-Cys1624, Cys1611-Cys1636, Cys1737-Cys1748, Cys1743-Cys1757, Cys1759-Cys1772, Cys1778-Cys1793, Cys1788-Cys1802, and Cys1804-Cys1817. A C-terminal domain region spans residues 1639–1821 (ARIEAEREAG…AGPPHCTAKE (183 aa)). Residues 1733-1773 (QAEECGILNGCENGRCVRVREGYTCDCFEGFQLDAAHMACV) form the EGF-like 19; calcium-binding domain. An EGF-like 20; calcium-binding domain is found at 1774–1818 (DVNECDDLNGPAVLCVHGYCENTEGSYRCHCSPGYVAEAGPPHCT).

It belongs to the LTBP family. As to quaternary structure, forms part of the large latent transforming growth factor beta precursor complex; removal is essential for activation of complex. Interacts with SDC4. Interacts (via C-terminal domain) with FBN1 (via N-terminal domain) in a Ca(+2)-dependent manner. N-Glycosylated. In terms of processing, contains hydroxylated asparagine residues. Expressed in the aorta (at protein level). Expressed in lung, weakly expressed in heart, placenta, liver and skeletal muscle.

It is found in the secreted. The protein localises to the extracellular space. The protein resides in the extracellular matrix. Functionally, may play an integral structural role in elastic-fiber architectural organization and/or assembly. The sequence is that of Latent-transforming growth factor beta-binding protein 2 (LTBP2) from Homo sapiens (Human).